Here is a 483-residue protein sequence, read N- to C-terminus: Essential nuclear protein 1 (483 aa).

Disordered regions lie at residues 1–21 (MARA…LKDL), 33–55 (KKKL…GYID), 67–123 (KEQQ…EGDY), and 171–200 (ESQV…GLKS). Residues 96-123 (YDDEDEDEDEDEEAFGEDISDFEPEGDY) show a composition bias toward acidic residues. Ser-172 is subject to Phosphoserine; by ATM or ATR. A compositionally biased stretch (acidic residues) spans 174–183 (VEDMQDDEPL). The segment covering 185–198 (NEQNTSRGNISSGL) has biased composition (polar residues). A phosphoserine mark is found at Ser-190 and Ser-404.

The protein belongs to the bystin family.

It localises to the cytoplasm. It is found in the nucleus. Its subcellular location is the nucleolus. Required for normal export of the pre-40S particles from the nucleus to the cytoplasm. Its subcellular location and association with pre-40S subunit shifts from mixed cytoplasm/nucleus to all nuclear in RPS19 disruptions, suggesting it acts after the ribosomal protein. In Saccharomyces cerevisiae (strain ATCC 204508 / S288c) (Baker's yeast), this protein is Essential nuclear protein 1 (ENP1).